Consider the following 326-residue polypeptide: Peroxidase 46 (326 aa).

The first 27 residues, 1–27 (MASSYRINCSTLLHLLMFLSSLLTSSA), serve as a signal peptide directing secretion. The N-linked (GlcNAc...) asparagine glycan is linked to Asn28. 4 disulfides stabilise this stretch: Cys38-Cys114, Cys71-Cys76, Cys120-Cys322, and Cys199-Cys233. His69 functions as the Proton acceptor in the catalytic mechanism. Residues Asp70, Val73, Gly75, Asp77, and Ser79 each coordinate Ca(2+). A glycan (N-linked (GlcNAc...) asparagine) is linked at Asn85. Residue His192 participates in heme b binding. Position 193 (Thr193) interacts with Ca(2+). Asp246, Thr249, and Asp254 together coordinate Ca(2+). Residue Asn278 is glycosylated (N-linked (GlcNAc...) asparagine).

This sequence belongs to the peroxidase family. Classical plant (class III) peroxidase subfamily. Requires heme b as cofactor. The cofactor is Ca(2+).

Its subcellular location is the secreted. It catalyses the reaction 2 a phenolic donor + H2O2 = 2 a phenolic radical donor + 2 H2O. Functionally, removal of H(2)O(2), oxidation of toxic reductants, biosynthesis and degradation of lignin, suberization, auxin catabolism, response to environmental stresses such as wounding, pathogen attack and oxidative stress. These functions might be dependent on each isozyme/isoform in each plant tissue. The protein is Peroxidase 46 (PER46) of Arabidopsis thaliana (Mouse-ear cress).